The chain runs to 156 residues: Small ribosomal subunit protein uS7 (156 aa).

It belongs to the universal ribosomal protein uS7 family. In terms of assembly, part of the 30S ribosomal subunit. Contacts proteins S9 and S11.

In terms of biological role, one of the primary rRNA binding proteins, it binds directly to 16S rRNA where it nucleates assembly of the head domain of the 30S subunit. Is located at the subunit interface close to the decoding center, probably blocks exit of the E-site tRNA. This is Small ribosomal subunit protein uS7 from Saccharophagus degradans (strain 2-40 / ATCC 43961 / DSM 17024).